We begin with the raw amino-acid sequence, 900 residues long: MSTTSLQQFATATSFSPFSNSQSARMSQSQSQTIGLDTLAEGSQYVLEQLQLSREGGNSENNSTFKPSSVRDSLAEARSMIRKNSSSAPVRRRISRACDQCNQLRTKCDGQNPCAHCIEFGLTCEYARERKKRGKASKKDIAAAAAAAGHQGGMGNRSPTDRRLSQEPGGRYDSVLEASRVQSHLPANGLSSIHNTQAAHSQPPLGSALDALHLNHFTQLNESGRSQMPVSDLRSLQILHNNPRSPSALPHGLNAYNDNTFSLLNSQEPNTTSLNHFRLGNSTDNPSAQFLGLSPPAQSPGWLPLPSPSPANFPSFPMAPFSGTSLRYPVLQPVLPHIASIIPQSLACDLLDLYFTSSSSSHLSPQSPYVVGYIFRKQSFLHPTKPRVCSPGLLASMLWVGAQTSDAPFLTSPPSARGRVCQKLLELTIGLLRPLIHGPALGEASPNYAANMVINGVALGGFGVSMDQLGAQSTATGAVDDVATYVHLATVVSASEYKAASMRWWTAAWSLARELKLGRELPPNASQPGQDGERENEGDNPSKRNQSLHGGNSNVNVTEEEREERRRLWWLLYATDRHLALCYNRPLTLLDKECSQLLQPMNDDLWQAGDFPAATYRAVGPPIECTGHSMFGYFLPLMTILGGIIDLQQAREHPRYGLTFRSGPDLDQYIMAITQQLDAYGQSLKDFEARYINSLALAENEPPENPHIDHLSPSGRSSSTVGSRVNESIVHTKMVVAYGTHIMHVLYVLLAGKWDPINLLEDHDMWISSESFLAAMSHAVGAAEAAADILEYDPDLSFMPFFFGIYLLQGSFLLLLAADKLQGDANPSVVRACETIVRAHEACVVTLNTEYQRTFRKVMRSALAQVRGRVPDDFGEQQQRRREVLSLYRWTGDGTGLALS.

Positions 53-71 are enriched in polar residues; the sequence is SREGGNSENNSTFKPSSVR. The disordered stretch occupies residues 53-75; it reads SREGGNSENNSTFKPSSVRDSLA. Positions 98-124 form a DNA-binding region, zn(2)-C6 fungal-type; it reads CDQCNQLRTKCDGQNPCAHCIEFGLTC. 3 disordered regions span residues 137 to 169, 520 to 559, and 701 to 722; these read SKKD…QEPG, ELPP…NVTE, and EPPE…STVG. Positions 531 to 542 are enriched in basic and acidic residues; the sequence is DGERENEGDNPS. Residues 543–557 are compositionally biased toward polar residues; sequence KRNQSLHGGNSNVNV. Over residues 712–722 the composition is skewed to low complexity; sequence SPSGRSSSTVG.

The protein belongs to the xlnR/xlr1 family.

It localises to the nucleus. In terms of biological role, transcriptional activator of the xylanolytic system. Involved in the regulation of extracellular cellulolytic and xylanolytic genes and in the regulation of the intracellular activities of D-xylose catabolic genes in the pentose catabolic pathway (PCP) in response to the presence of D-xylose. Binds to the DNA sequence 5'-GGNTAAA-3'. The protein is Xylanolytic transcriptional activator xlnR (xlnR) of Emericella nidulans (strain FGSC A4 / ATCC 38163 / CBS 112.46 / NRRL 194 / M139) (Aspergillus nidulans).